We begin with the raw amino-acid sequence, 279 residues long: Large ribosomal subunit protein uL2 (279 aa).

The tract at residues 223-279 (VVMNPVDHPHGGGEGRTSGGRHPVTPWGKPTKGKRTRSNKKTDSLIMRSRHLAKKKR) is disordered. A compositionally biased stretch (basic residues) spans 270 to 279 (RSRHLAKKKR).

The protein belongs to the universal ribosomal protein uL2 family. As to quaternary structure, part of the 50S ribosomal subunit. Forms a bridge to the 30S subunit in the 70S ribosome.

Its function is as follows. One of the primary rRNA binding proteins. Required for association of the 30S and 50S subunits to form the 70S ribosome, for tRNA binding and peptide bond formation. It has been suggested to have peptidyltransferase activity; this is somewhat controversial. Makes several contacts with the 16S rRNA in the 70S ribosome. The polypeptide is Large ribosomal subunit protein uL2 (Rhodospirillum rubrum (strain ATCC 11170 / ATH 1.1.1 / DSM 467 / LMG 4362 / NCIMB 8255 / S1)).